The chain runs to 210 residues: Peroxynitrite isomerase (210 aa).

The GXWXGXG signature appears at G21–G27. H190 lines the heme b pocket.

It belongs to the nitrobindin family. In terms of assembly, homodimer. Requires heme b as cofactor.

It carries out the reaction peroxynitrite = nitrate. Its pathway is nitrogen metabolism. In terms of biological role, heme-binding protein able to scavenge peroxynitrite and to protect free L-tyrosine against peroxynitrite-mediated nitration, by acting as a peroxynitrite isomerase that converts peroxynitrite to nitrate. Therefore, this protein likely plays a role in peroxynitrite sensing and in the detoxification of reactive nitrogen and oxygen species (RNS and ROS, respectively). Is able to bind nitric oxide (NO) in vitro, but may act as a sensor of peroxynitrite levels in vivo. The sequence is that of Peroxynitrite isomerase from Renibacterium salmoninarum (strain ATCC 33209 / DSM 20767 / JCM 11484 / NBRC 15589 / NCIMB 2235).